A 124-amino-acid chain; its full sequence is Small ribosomal subunit protein uS12 (124 aa).

A compositionally biased stretch (basic residues) spans 11 to 20 (GRKRLKKKSK). Positions 11–30 (GRKRLKKKSKSPALENNPQK) are disordered. The residue at position 89 (Asp-89) is a 3-methylthioaspartic acid. The interval 105–124 (EGVANRRQSRSRYGAKKPKK) is disordered. Basic residues predominate over residues 111 to 124 (RQSRSRYGAKKPKK).

Belongs to the universal ribosomal protein uS12 family. As to quaternary structure, part of the 30S ribosomal subunit. Contacts proteins S8 and S17. May interact with IF1 in the 30S initiation complex.

With S4 and S5 plays an important role in translational accuracy. In terms of biological role, interacts with and stabilizes bases of the 16S rRNA that are involved in tRNA selection in the A site and with the mRNA backbone. Located at the interface of the 30S and 50S subunits, it traverses the body of the 30S subunit contacting proteins on the other side and probably holding the rRNA structure together. The combined cluster of proteins S8, S12 and S17 appears to hold together the shoulder and platform of the 30S subunit. This is Small ribosomal subunit protein uS12 from Kosmotoga olearia (strain ATCC BAA-1733 / DSM 21960 / TBF 19.5.1).